The primary structure comprises 31 residues: Cytochrome b6-f complex subunit 6 (31 aa).

Residues T3–I23 traverse the membrane as a helical segment.

Belongs to the PetL family. In terms of assembly, the 4 large subunits of the cytochrome b6-f complex are cytochrome b6, subunit IV (17 kDa polypeptide, PetD), cytochrome f and the Rieske protein, while the 4 small subunits are PetG, PetL, PetM and PetN. The complex functions as a dimer.

It is found in the plastid. Its subcellular location is the chloroplast thylakoid membrane. In terms of biological role, component of the cytochrome b6-f complex, which mediates electron transfer between photosystem II (PSII) and photosystem I (PSI), cyclic electron flow around PSI, and state transitions. PetL is important for photoautotrophic growth as well as for electron transfer efficiency and stability of the cytochrome b6-f complex. This Lotus japonicus (Lotus corniculatus var. japonicus) protein is Cytochrome b6-f complex subunit 6.